Reading from the N-terminus, the 133-residue chain is Holo-[acyl-carrier-protein] synthase (133 aa).

2 residues coordinate Mg(2+): aspartate 8 and glutamate 64.

It belongs to the P-Pant transferase superfamily. AcpS family. It depends on Mg(2+) as a cofactor.

Its subcellular location is the cytoplasm. The catalysed reaction is apo-[ACP] + CoA = holo-[ACP] + adenosine 3',5'-bisphosphate + H(+). Functionally, transfers the 4'-phosphopantetheine moiety from coenzyme A to a Ser of acyl-carrier-protein. The polypeptide is Holo-[acyl-carrier-protein] synthase (Shewanella loihica (strain ATCC BAA-1088 / PV-4)).